Here is a 616-residue protein sequence, read N- to C-terminus: Chaperone protein HscA homolog (616 aa).

It belongs to the heat shock protein 70 family.

In terms of biological role, chaperone involved in the maturation of iron-sulfur cluster-containing proteins. Has a low intrinsic ATPase activity which is markedly stimulated by HscB. This Mannheimia succiniciproducens (strain KCTC 0769BP / MBEL55E) protein is Chaperone protein HscA homolog.